The sequence spans 314 residues: O-antigen chain rhamnosyltransferase RfbN (314 aa).

It belongs to the glycosyltransferase 2 family.

The catalysed reaction is alpha-D-galactosyl-di-trans,octa-cis-undecaprenyl diphosphate + dTDP-beta-L-rhamnose = alpha-L-rhamnosyl-(1-&gt;3)-alpha-D-galactosyl-1-diphospho-di-trans,octa-cis-undecaprenol + dTDP + H(+). It participates in bacterial outer membrane biogenesis; LPS O-antigen biosynthesis. Its function is as follows. Rhamnosyltransferase involved in the biosynthesis of the repeat unit of the lipopolysaccharide (LPS) O-antigen region. Catalyzes the addition of a rhamnose to the galactosyl-undecaprenyl diphosphate intermediate. This Salmonella typhimurium (strain LT2 / SGSC1412 / ATCC 700720) protein is O-antigen chain rhamnosyltransferase RfbN.